The chain runs to 110 residues: MSCQQNQQQCQPPPKCPPKCTPKCPPKCPPKCPPQCPAPCFPAVSSCCGPSSGSCCGPSSGGCCSSGAGGCSLSHHRPRLFHRRRHQSPDCCESEPSGGSGCCHSSGGCC.

Low complexity predominate over residues 1-10 (MSCQQNQQQC). A disordered region spans residues 1 to 23 (MSCQQNQQQCQPPPKCPPKCTPK). A compositionally biased stretch (pro residues) spans 11–23 (QPPPKCPPKCTPK).

This sequence belongs to the LCE family. In terms of assembly, interacts with CYSRT1; the interaction is direct. As to expression, skin-specific. Expression was readily detected in adult trunk skin, adult arm skin, fetal skin, penal skin, vulva, esophagus and tongue. Not expressed in the cervix, rectum, lung, colon, or placenta.

In terms of biological role, precursors of the cornified envelope of the stratum. The chain is Late cornified envelope protein 2C (LCE2C) from Homo sapiens (Human).